The following is a 302-amino-acid chain: Glycine--tRNA ligase alpha subunit (302 aa).

Belongs to the class-II aminoacyl-tRNA synthetase family. Tetramer of two alpha and two beta subunits.

The protein localises to the cytoplasm. The enzyme catalyses tRNA(Gly) + glycine + ATP = glycyl-tRNA(Gly) + AMP + diphosphate. This Xanthomonas oryzae pv. oryzae (strain MAFF 311018) protein is Glycine--tRNA ligase alpha subunit.